The primary structure comprises 193 residues: Protein SPEAR3 (193 aa).

Disordered stretches follow at residues 1-50 (MGSS…GVAQ) and 85-104 (GYPS…SSPP). The segment covering 14 to 26 (SSSSSPTSSSSSP) has biased composition (low complexity). Positions 44–52 (RGLGVAQLE) match the SPL motif. Residues 86–101 (YPSIPSSSPSFSYASS) show a composition bias toward low complexity. The EAR motif lies at 187-193 (LDLELRL).

In terms of assembly, interacts with TPL and the TPR corepressors TPR1, TPR2, TPR3, TPR4, and with the TCP transcription factors TCP2, TCP3, TCP4, TCP5, TCP10, TCP13, TCP17 and TCP24. Interacts with SPL and SPEAR2. Expressed in shoot apical meristem, cotyledons and leaves. Detected at the leaf margins and in the vascular bundles at the base of the leaves.

The protein resides in the nucleus. Transcriptional regulator of leaf development. Acts as an adapter-like transcriptional repressor recruiting TPL/TPR corepressors to inhibit the CIN-like TCP transcription factors. This Arabidopsis thaliana (Mouse-ear cress) protein is Protein SPEAR3.